A 364-amino-acid chain; its full sequence is Esculetin O-methyltransferase (364 aa).

Asn132 provides a ligand contact to bergaptol. S-adenosyl-L-homocysteine is bound by residues Gly209, Asp232, Asp252, Met253, Met265, and Lys266. His270 contributes to the bergaptol binding site. Catalysis depends on His270, which acts as the Proton acceptor.

Belongs to the class I-like SAM-binding methyltransferase superfamily. Cation-independent O-methyltransferase family. COMT subfamily. As to quaternary structure, homodimer. Expressed ubiquitously.

The catalysed reaction is bergaptol + S-adenosyl-L-methionine = bergapten + S-adenosyl-L-homocysteine. It catalyses the reaction xanthotoxol + S-adenosyl-L-methionine = xanthotoxin + S-adenosyl-L-homocysteine + H(+). It carries out the reaction esculetin + S-adenosyl-L-methionine = isoscopoletin + S-adenosyl-L-homocysteine + H(+). The enzyme catalyses esculetin + S-adenosyl-L-methionine = scopoletin + S-adenosyl-L-homocysteine + H(+). It functions in the pathway aromatic compound metabolism. Its pathway is secondary metabolite biosynthesis. Its activity is regulated as follows. Inhibited by zinc Zn(2+), copper Cu(2+) and silver Ag(+) ions. Its function is as follows. O-methyltransferase involved in the biosynthesis of methoxylated coumarins natural products such as isoscopoletin, scopoletin, xanthotoxin and bergapten, photosensitizers used for medical purpose such as treating psoriasis and vitiligo or facilitating resistance to microbial infection and other stresses. Catalyzes the methylation of esculetin, bergaptol and xanthotoxol, but seems inactive on scopoletin and isoscopoletin. This Kitagawia praeruptora (Peucedanum praeruptorum) protein is Esculetin O-methyltransferase.